A 338-amino-acid chain; its full sequence is Microtubule-associated protein RP/EB family member 2 (338 aa).

A disordered region spans residues 1 to 21 (MPGPTQALSPNGENNNDIIQD). The Calponin-homology (CH) domain occupies 57–159 (TMSRHDIIAW…FIQWFKKFFD (103 aa)). 2 disordered regions span residues 171-241 (EARQ…KDLE) and 300-338 (SEEH…FHFV). The segment covering 200–234 (SPTAGAAKSSPASKPGSTPSRPSSAKKAAPSSSAS) has biased composition (low complexity). An EB1 C-terminal domain is found at 236 to 306 (SDKDLETQVI…LYASEEHESH (71 aa)). Residues 300–327 (SEEHESHTEEHEGEEQVHEQPSSRRSTD) are compositionally biased toward basic and acidic residues. A compositionally biased stretch (low complexity) spans 328–338 (SRSVSDNFHFV).

It belongs to the MAPRE family.

Its subcellular location is the cytoplasm. The protein localises to the cytoskeleton. In terms of biological role, may be involved in microtubule polymerization, and spindle function by stabilizing microtubules and anchoring them at centrosomes. The sequence is that of Microtubule-associated protein RP/EB family member 2 (MAPRE2) from Gallus gallus (Chicken).